The sequence spans 57 residues: UPF0509 protein YciZ (57 aa).

This sequence belongs to the UPF0509 family.

This Escherichia coli O157:H7 protein is UPF0509 protein YciZ (yciZ).